Here is a 214-residue protein sequence, read N- to C-terminus: uncharacterized protein (214 aa).

Positions Thr131–Tyr214 are disordered. A compositionally biased stretch (basic residues) spans His174–Val189. Residues Asp197–Tyr214 show a composition bias toward low complexity.

This is an uncharacterized protein from Tupaia.